Consider the following 757-residue polypeptide: RNA-directed RNA polymerase catalytic subunit (757 aa).

The segment at 50–81 is disordered; sequence SEKGKWTTNTETGAPQLNPIDGPLPEDNEPSG. Residues 55-64 show a composition bias toward polar residues; that stretch reads WTTNTETGAP. 2 consecutive short sequence motifs (nuclear localization signal) follow at residues 187 to 195 and 203 to 216; these read RKRRVRDNM and RTIG…NKRS. The promoter-binding site stretch occupies residues 249–256; it reads RGFVYFVE. The RdRp catalytic domain maps to 286-483; that stretch reads VRKMMTNSQD…GINMSKKKSY (198 aa).

This sequence belongs to the influenza viruses polymerase PB1 family. As to quaternary structure, influenza RNA polymerase is composed of three subunits: PB1, PB2 and PA. Interacts (via N-terminus) with PA (via C-terminus). Interacts (via C-terminus) with PB2 (via N-terminus); this interaction is essential for transcription initiation. In terms of processing, phosphorylated by host PRKCA.

The protein localises to the host nucleus. It is found in the host cytoplasm. It carries out the reaction RNA(n) + a ribonucleoside 5'-triphosphate = RNA(n+1) + diphosphate. In terms of biological role, RNA-dependent RNA polymerase which is responsible for replication and transcription of virus RNA segments. The transcription of viral mRNAs occurs by a unique mechanism called cap-snatching. 5' methylated caps of cellular mRNAs are cleaved after 10-13 nucleotides by PA. In turn, these short capped RNAs are used as primers by PB1 for transcription of viral mRNAs. During virus replication, PB1 initiates RNA synthesis and copy vRNA into complementary RNA (cRNA) which in turn serves as a template for the production of more vRNAs. The chain is RNA-directed RNA polymerase catalytic subunit from Influenza A virus (strain A/Swine/Colorado/1/1977 H3N2).